We begin with the raw amino-acid sequence, 317 residues long: 4-hydroxy-3-methylbut-2-enyl diphosphate reductase (317 aa).

C12 contacts [4Fe-4S] cluster. (2E)-4-hydroxy-3-methylbut-2-enyl diphosphate-binding residues include H43 and H81. Dimethylallyl diphosphate is bound by residues H43 and H81. H43 and H81 together coordinate isopentenyl diphosphate. C103 serves as a coordination point for [4Fe-4S] cluster. H131 serves as a coordination point for (2E)-4-hydroxy-3-methylbut-2-enyl diphosphate. H131 is a dimethylallyl diphosphate binding site. H131 is a binding site for isopentenyl diphosphate. The active-site Proton donor is the E133. T172 is a (2E)-4-hydroxy-3-methylbut-2-enyl diphosphate binding site. C200 lines the [4Fe-4S] cluster pocket. Positions 228, 230, and 273 each coordinate (2E)-4-hydroxy-3-methylbut-2-enyl diphosphate. Positions 228, 230, and 273 each coordinate dimethylallyl diphosphate. Residues S228, N230, and S273 each coordinate isopentenyl diphosphate.

The protein belongs to the IspH family. The cofactor is [4Fe-4S] cluster.

It catalyses the reaction isopentenyl diphosphate + 2 oxidized [2Fe-2S]-[ferredoxin] + H2O = (2E)-4-hydroxy-3-methylbut-2-enyl diphosphate + 2 reduced [2Fe-2S]-[ferredoxin] + 2 H(+). The catalysed reaction is dimethylallyl diphosphate + 2 oxidized [2Fe-2S]-[ferredoxin] + H2O = (2E)-4-hydroxy-3-methylbut-2-enyl diphosphate + 2 reduced [2Fe-2S]-[ferredoxin] + 2 H(+). It participates in isoprenoid biosynthesis; dimethylallyl diphosphate biosynthesis; dimethylallyl diphosphate from (2E)-4-hydroxy-3-methylbutenyl diphosphate: step 1/1. Its pathway is isoprenoid biosynthesis; isopentenyl diphosphate biosynthesis via DXP pathway; isopentenyl diphosphate from 1-deoxy-D-xylulose 5-phosphate: step 6/6. Functionally, catalyzes the conversion of 1-hydroxy-2-methyl-2-(E)-butenyl 4-diphosphate (HMBPP) into a mixture of isopentenyl diphosphate (IPP) and dimethylallyl diphosphate (DMAPP). Acts in the terminal step of the DOXP/MEP pathway for isoprenoid precursor biosynthesis. The protein is 4-hydroxy-3-methylbut-2-enyl diphosphate reductase of Exiguobacterium sp. (strain ATCC BAA-1283 / AT1b).